The following is a 496-amino-acid chain: Matrilin-1 (496 aa).

Positions 1 to 22 (MRVLSGTSLMLCSLLLLLQALC) are cleaved as a signal peptide. The 200-residue stretch at 23-222 (SPGLAPQSRG…SRKFQEAFCV (200 aa)) folds into the VWFA 1 domain. Asn-76 carries an N-linked (GlcNAc...) asparagine glycan. The EGF-like domain maps to 223 to 263 (VSDLCATGDHDCEQVCISSPGSYTCACHEGFTLNSDGKTCN). Intrachain disulfides connect Cys-227–Cys-238, Cys-234–Cys-247, and Cys-249–Cys-262. A VWFA 2 domain is found at 264–453 (VCSGGGGSSA…GKKLQKKICV (190 aa)). The N-linked (GalNAc...) asparagine glycan is linked to Asn-344. A coiled-coil region spans residues 467–495 (QAKVEGLLQALTRKLEAVSKRLAILENTV).

In terms of assembly, homotrimer. Part of a complex composed of MATN1 (via VWFA1 domain), type 2 collagens and type 6 collagens. Forms a complex (via covalent bonds) with ACAN; the interaction increases in abundance with increasing age of the organism via an increase in occupancy of MATN1 binding sites. Interacts with COMP. Post-translationally, N-glycosylated; reduces binding affinity for type 2 collagens.

Its subcellular location is the secreted. The protein resides in the extracellular space. The protein localises to the extracellular matrix. Its function is as follows. A major component of the extracellular matrix of non-articular cartilage. Binds to type 2 collagens and forms long concatenated protein networks as part of the extracellular matrix. Required for the network-like organization and bundling of collagen fibrils surrounding chondrocytes in the zones of maturation and hypertrophy. Required for mechanotransduction and adaption to mechanical loading in cartilage chondrocytes, resulting in an increase in expression of the extracellular matrix components ACAN and COL2A1. Acts as a moderator of angiogenesis in response to injury. The chain is Matrilin-1 from Homo sapiens (Human).